Consider the following 539-residue polypeptide: GMP synthase [glutamine-hydrolyzing] (539 aa).

The region spanning 4–203 (KILILDFGSQ…VHDICGCKSD (200 aa)) is the Glutamine amidotransferase type-1 domain. Cys82 acts as the Nucleophile in catalysis. Active-site residues include His177 and Glu179. The GMPS ATP-PPase domain maps to 204-395 (WNMPDYIAEA…LGLPHDMVYR (192 aa)). 231 to 237 (SGGVDSS) is an ATP binding site.

In terms of assembly, homodimer.

It catalyses the reaction XMP + L-glutamine + ATP + H2O = GMP + L-glutamate + AMP + diphosphate + 2 H(+). Its pathway is purine metabolism; GMP biosynthesis; GMP from XMP (L-Gln route): step 1/1. Functionally, catalyzes the synthesis of GMP from XMP. The polypeptide is GMP synthase [glutamine-hydrolyzing] (Herminiimonas arsenicoxydans).